Consider the following 458-residue polypeptide: 5-hydroxytryptamine receptor 2C (458 aa).

Residues 1–32 (MVNLRNAVHSFLVHLIGLLVWQSDISVSPVAA) form the signal peptide. The Extracellular segment spans residues 33–55 (IVTDIFNTSDGGRFKFPDGVQNW). N-linked (GlcNAc...) asparagine glycosylation is present at Asn39. The chain crosses the membrane as a helical span at residues 56–80 (PALSIVIIIIMTIGGNILVIMAVSM). Over 81–86 (EKKLHN) the chain is Cytoplasmic. Residues 87-111 (ATNYFLMSLAIADMLVGLLVMPLSL) traverse the membrane as a helical segment. Topologically, residues 112 to 128 (LAILYDYVWPLPRYLCP) are extracellular. Cys127 and Cys207 are disulfide-bonded. Residues 129 to 151 (VWISLDVLFSTASIMHLCAISLD) traverse the membrane as a helical segment. Thr139 is an ergotamine binding site. Residues 151-153 (DRY) carry the DRY motif; important for ligand-induced conformation changes motif. The Cytoplasmic segment spans residues 152 to 167 (RYVAIRNPIEHSRFNS). Residues 168–189 (RTKAIMKIAIVWAISIGVSVPI) form a helical membrane-spanning segment. The Extracellular segment spans residues 190–213 (PVIGLRDEEKVFVNNTTCVLNDPN). An N-linked (GlcNAc...) asparagine glycan is attached at Asn204. Position 209 (Leu209) interacts with ergotamine. Residues 214–236 (FVLIGSFVAFFIPLTIMVITYCL) traverse the membrane as a helical segment. Residues 237–311 (TIYVLRRQAL…AINNERKASK (75 aa)) are Cytoplasmic-facing. Positions 274–301 (EENSANPNQDQNARRRKKKERRPRGTMQ) are disordered. Residues 287 to 297 (RRRKKKERRPR) show a composition bias toward basic residues. Residues 312 to 336 (VLGIVFFVFLIMWCPFFITNILSVL) form a helical membrane-spanning segment. A disulfide bridge connects residues Cys337 and Cys341. Residues 337 to 347 (CEKSCNQKLME) lie on the Extracellular side of the membrane. Residues 348–370 (KLLNVFVWIGYVCSGINPLVYTL) traverse the membrane as a helical segment. An NPxxY motif; important for ligand-induced conformation changes and signaling motif is present at residues 364–368 (NPLVY). Topologically, residues 371–458 (FNKIYRRAFS…SVVSERISSV (88 aa)) are cytoplasmic. The short motif at 456 to 458 (SSV) is the PDZ-binding element.

The protein belongs to the G-protein coupled receptor 1 family. In terms of assembly, interacts with MPDZ. Interacts with ARRB2. Interacts with MPP3; this interaction stabilizes the receptor at the plasma membrane and prevents the desensitization of the HTR2C receptor-mediated calcium response. Post-translationally, N-glycosylated. Detected in brain.

It is found in the cell membrane. Its activity is regulated as follows. Inhibited by inverse agonist ritanserin. In terms of biological role, G-protein coupled receptor for 5-hydroxytryptamine (serotonin). Also functions as a receptor for various drugs and psychoactive substances, including ergot alkaloid derivatives, 1-2,5,-dimethoxy-4-iodophenyl-2-aminopropane (DOI) and lysergic acid diethylamide (LSD). Ligand binding causes a conformation change that triggers signaling via guanine nucleotide-binding proteins (G proteins) and modulates the activity of downstream effectors. HTR2C is coupled to G(q)/G(11) G alpha proteins and activates phospholipase C-beta, releasing diacylglycerol (DAG) and inositol 1,4,5-trisphosphate (IP3) second messengers that modulate the activity of phosphatidylinositol 3-kinase and promote the release of Ca(2+) ions from intracellular stores, respectively. Beta-arrestin family members inhibit signaling via G proteins and mediate activation of alternative signaling pathways. Regulates neuronal activity via the activation of short transient receptor potential calcium channels in the brain, and thereby modulates the activation of pro-opiomelanocortin neurons and the release of CRH that then regulates the release of corticosterone. Plays a role in the regulation of appetite and eating behavior, responses to anxiogenic stimuli and stress. Plays a role in insulin sensitivity and glucose homeostasis. This is 5-hydroxytryptamine receptor 2C from Homo sapiens (Human).